Consider the following 594-residue polypeptide: Neopentalenolactone D synthase (594 aa).

Residues 64–65 (IG), 86–87 (DK), 94–95 (TW), 106–107 (DV), Tyr-112, Val-156, and Met-494 each bind FAD.

The protein belongs to the FAD-binding monooxygenase family. The cofactor is FAD.

It catalyses the reaction 1-deoxy-11-oxopentalenate + NADPH + O2 + H(+) = neopentalenolactone D + NADP(+) + H2O. Its pathway is antibiotic biosynthesis; neopentalenolactone biosynthesis. Catalyzes the flavin-dependent Baeyer-Villiger oxidation of 1-deoxy-11-oxopentalenic acid to neopentalenolactone D in the biosynthesis of neopentalenolactone antibiotic. In Streptomyces avermitilis (strain ATCC 31267 / DSM 46492 / JCM 5070 / NBRC 14893 / NCIMB 12804 / NRRL 8165 / MA-4680), this protein is Neopentalenolactone D synthase (ptlE).